Consider the following 78-residue polypeptide: Defensin-like protein 201 (78 aa).

The N-terminal stretch at 1 to 22 is a signal peptide; it reads MRNLINFAVLIMTIFIVSASGA. Disulfide bonds link cysteine 32-cysteine 78, cysteine 41-cysteine 61, cysteine 46-cysteine 71, and cysteine 50-cysteine 73.

This sequence belongs to the DEFL family.

It is found in the secreted. This Arabidopsis thaliana (Mouse-ear cress) protein is Defensin-like protein 201.